The chain runs to 259 residues: Undecaprenyl-diphosphatase 4 (259 aa).

8 helical membrane-spanning segments follow: residues 1–21 (MNWLEAFILGIIQGLTEFLPI), 39–59 (AGLFLDTMLHIGTLLAVFIYY), 71–91 (FSKLMLLLIVGTIPAVVIGLL), 99–119 (ISKTGITIGWEFLVTGFFLYV), 133–153 (ITYKDAFIIGSFQAAAIFPAI), 173–193 (AAYFSFLLSTPAIVGAIILQF), 208–228 (SLIVGTLSAAFFGYIAVSWMI), and 239–259 (FAYYVWGLGILILTLQFTDVF).

The protein belongs to the UppP family.

Its subcellular location is the cell membrane. It carries out the reaction di-trans,octa-cis-undecaprenyl diphosphate + H2O = di-trans,octa-cis-undecaprenyl phosphate + phosphate + H(+). Functionally, catalyzes the dephosphorylation of undecaprenyl diphosphate (UPP). Confers resistance to bacitracin. This chain is Undecaprenyl-diphosphatase 4, found in Bacillus thuringiensis subsp. konkukian (strain 97-27).